The sequence spans 103 residues: Ubiquitin-related modifier 1 (103 aa).

Gly-103 carries the 1-thioglycine modification. Gly-103 is covalently cross-linked (Glycyl lysine isopeptide (Gly-Lys) (interchain with K-? in acceptor proteins)).

This sequence belongs to the URM1 family. C-terminal thiocarboxylation occurs in 2 steps, it is first acyl-adenylated (-COAMP) via the hesA/moeB/thiF part of UBA4, then thiocarboxylated (-COSH) via the rhodanese domain of UBA4.

The protein resides in the cytoplasm. Its pathway is tRNA modification; 5-methoxycarbonylmethyl-2-thiouridine-tRNA biosynthesis. Acts as a sulfur carrier required for 2-thiolation of mcm(5)S(2)U at tRNA wobble positions of cytosolic tRNA(Lys), tRNA(Glu) and tRNA(Gln). Serves as sulfur donor in tRNA 2-thiolation reaction by being thiocarboxylated (-COSH) at its C-terminus by the MOCS3 homolog UBA4. The sulfur is then transferred to tRNA to form 2-thiolation of mcm(5)S(2)U. Prior mcm(5) tRNA modification by the elongator complex is required for 2-thiolation. Also acts as a ubiquitin-like protein (UBL) that is covalently conjugated via an isopeptide bond to lysine residues of target proteins such as AHP1. The thiocarboxylated form serves as substrate for conjugation and oxidative stress specifically induces the formation of UBL-protein conjugates. The protein is Ubiquitin-related modifier 1 of Vanderwaltozyma polyspora (strain ATCC 22028 / DSM 70294 / BCRC 21397 / CBS 2163 / NBRC 10782 / NRRL Y-8283 / UCD 57-17) (Kluyveromyces polysporus).